A 268-amino-acid chain; its full sequence is Putative ABC transporter ATP-binding protein LMOf2365_1216 (268 aa).

Residues 2–237 (LKTEHISFQY…KSNVEQAGLV (236 aa)) form the ABC transporter domain. 35–42 (GANGSGKS) contributes to the ATP binding site.

The protein belongs to the ABC transporter superfamily.

It localises to the cell membrane. Probably part of an ABC transporter complex. Responsible for energy coupling to the transport system. This Listeria monocytogenes serotype 4b (strain F2365) protein is Putative ABC transporter ATP-binding protein LMOf2365_1216.